A 306-amino-acid polypeptide reads, in one-letter code: Protein FdhE homolog (306 aa).

Belongs to the FdhE family.

It is found in the cytoplasm. Functionally, necessary for formate dehydrogenase activity. The sequence is that of Protein FdhE homolog from Glaesserella parasuis serovar 5 (strain SH0165) (Haemophilus parasuis).